The primary structure comprises 276 residues: Pantothenate synthetase (276 aa).

Residue 26–33 (MGFLHAGH) coordinates ATP. The active-site Proton donor is histidine 33. Position 57 (glutamine 57) interacts with (R)-pantoate. Glutamine 57 is a binding site for beta-alanine. 143–146 (GQKD) is a binding site for ATP. Glutamine 149 is a binding site for (R)-pantoate. Residues isoleucine 172 and 180–183 (MSSR) contribute to the ATP site.

Belongs to the pantothenate synthetase family. In terms of assembly, homodimer.

The protein localises to the cytoplasm. It catalyses the reaction (R)-pantoate + beta-alanine + ATP = (R)-pantothenate + AMP + diphosphate + H(+). It participates in cofactor biosynthesis; (R)-pantothenate biosynthesis; (R)-pantothenate from (R)-pantoate and beta-alanine: step 1/1. Catalyzes the condensation of pantoate with beta-alanine in an ATP-dependent reaction via a pantoyl-adenylate intermediate. In Herpetosiphon aurantiacus (strain ATCC 23779 / DSM 785 / 114-95), this protein is Pantothenate synthetase.